The following is a 430-amino-acid chain: Adenylosuccinate synthetase (430 aa).

GTP-binding positions include 12 to 18 and 40 to 42; these read GDEGKGK and GHT. D13 (proton acceptor) is an active-site residue. Mg(2+) is bound by residues D13 and G40. Residues 13-16, 38-41, T128, R142, Q223, T238, and R302 each bind IMP; these read DEGK and NAGH. H41 serves as the catalytic Proton donor. Substrate is bound at residue 298–304; the sequence is VNTGRKR. Residues R304, 330 to 332, and 412 to 414 contribute to the GTP site; these read KLD and GVG.

It belongs to the adenylosuccinate synthetase family. In terms of assembly, homodimer. Requires Mg(2+) as cofactor.

It is found in the cytoplasm. It catalyses the reaction IMP + L-aspartate + GTP = N(6)-(1,2-dicarboxyethyl)-AMP + GDP + phosphate + 2 H(+). It functions in the pathway purine metabolism; AMP biosynthesis via de novo pathway; AMP from IMP: step 1/2. Functionally, plays an important role in the de novo pathway of purine nucleotide biosynthesis. Catalyzes the first committed step in the biosynthesis of AMP from IMP. This chain is Adenylosuccinate synthetase, found in Corynebacterium glutamicum (strain ATCC 13032 / DSM 20300 / JCM 1318 / BCRC 11384 / CCUG 27702 / LMG 3730 / NBRC 12168 / NCIMB 10025 / NRRL B-2784 / 534).